A 165-amino-acid chain; its full sequence is uncharacterized protein (165 aa).

Residues lysine 51 to lysine 102 form a disordered region. Polar residues predominate over residues threonine 66–proline 76.

This is an uncharacterized protein from Mus musculus (Mouse).